The following is a 106-amino-acid chain: Large ribosomal subunit protein uL24 (106 aa).

The protein belongs to the universal ribosomal protein uL24 family. As to quaternary structure, part of the 50S ribosomal subunit.

One of two assembly initiator proteins, it binds directly to the 5'-end of the 23S rRNA, where it nucleates assembly of the 50S subunit. In terms of biological role, one of the proteins that surrounds the polypeptide exit tunnel on the outside of the subunit. In Blochmanniella pennsylvanica (strain BPEN), this protein is Large ribosomal subunit protein uL24.